A 181-amino-acid polypeptide reads, in one-letter code: ATP synthase subunit delta (181 aa).

Belongs to the ATPase delta chain family. F-type ATPases have 2 components, F(1) - the catalytic core - and F(0) - the membrane proton channel. F(1) has five subunits: alpha(3), beta(3), gamma(1), delta(1), epsilon(1). F(0) has three main subunits: a(1), b(2) and c(10-14). The alpha and beta chains form an alternating ring which encloses part of the gamma chain. F(1) is attached to F(0) by a central stalk formed by the gamma and epsilon chains, while a peripheral stalk is formed by the delta and b chains.

Its subcellular location is the cell membrane. In terms of biological role, f(1)F(0) ATP synthase produces ATP from ADP in the presence of a proton or sodium gradient. F-type ATPases consist of two structural domains, F(1) containing the extramembraneous catalytic core and F(0) containing the membrane proton channel, linked together by a central stalk and a peripheral stalk. During catalysis, ATP synthesis in the catalytic domain of F(1) is coupled via a rotary mechanism of the central stalk subunits to proton translocation. Its function is as follows. This protein is part of the stalk that links CF(0) to CF(1). It either transmits conformational changes from CF(0) to CF(1) or is implicated in proton conduction. The protein is ATP synthase subunit delta of Mycoplasmoides gallisepticum (strain R(low / passage 15 / clone 2)) (Mycoplasma gallisepticum).